The primary structure comprises 487 residues: Alpha-1,4-L-rhamnosidase (487 aa).

A signal peptide spans 1-30 (MKNKKRLCHILKYIITCFLFGVIFIIPIQA). Residue E199 is the Proton donor of the active site.

It belongs to the glycosyl hydrolase 39 family.

It localises to the periplasm. Alpha-rhamnosidase involved in ulvan degradation. Ulvan is the main polysaccharide component of the Ulvales (green seaweed) cell wall. It is composed of disaccharide building blocks comprising 3-sulfated rhamnose (Rha3S) linked to D-glucuronic acid (GlcA), L-iduronic acid (IduA), or D-xylose (Xyl). Endo-acting alpha-1,4-L-rhamnosidase cleaves rhamnose sections interspersed between xylose residues within the polymer, degrading larger oligomers with consecutive Xyl-Rha3S units that are resistant to the ulvan lyases and producing dimers Xyl-Rha3S and Xyl2S-Rha3S as the smallest products. This Formosa agariphila (strain DSM 15362 / KCTC 12365 / LMG 23005 / KMM 3901 / M-2Alg 35-1) protein is Alpha-1,4-L-rhamnosidase.